The sequence spans 60 residues: Large ribosomal subunit protein uL30 (60 aa).

The protein belongs to the universal ribosomal protein uL30 family. In terms of assembly, part of the 50S ribosomal subunit.

In Streptococcus thermophilus (strain CNRZ 1066), this protein is Large ribosomal subunit protein uL30.